Consider the following 598-residue polypeptide: Ecto-NOX disulfide-thiol exchanger 2 (598 aa).

An RRM domain is found at 99–178; that stretch reads KTVFVGGLPE…GRLHVDFAQA (80 aa). 2 coiled-coil regions span residues 264–299 and 352–476; these read IQSA…LSGI and RREE…KQEN.

This sequence belongs to the ENOX family. The cofactor is Cu cation. Post-translationally, glycosylated.

It localises to the cell membrane. It is found in the secreted. The protein localises to the extracellular space. With respect to regulation, inhibited by the antitumor sulfonylurea LY181984, the vabilloid capsaicin, and retinoids. Its function is as follows. May be involved in cell growth. Probably acts as a terminal oxidase of plasma electron transport from cytosolic NAD(P)H via hydroquinones to acceptors at the cell surface. Hydroquinone oxidase activity alternates with a protein disulfide-thiol interchange/oxidoreductase activity which may control physical membrane displacements associated with vesicle budding or cell enlargement. The activities oscillate with a period length of 22 minutes and play a role in control of the ultradian cellular biological clock. This chain is Ecto-NOX disulfide-thiol exchanger 2 (Enox2), found in Mus musculus (Mouse).